The chain runs to 324 residues: MSERNAASARTVACLLGPTASGKTAAALALAARRPIEIVSVDSALVYRGMDIGTAKPTRDERAAVPHHLIDIVDPADAYSAAEFRADALRLVAQIAARGRTPLLAGGTMLYYRALTQGLNDLPAADPDVRATLDADAARDGWPALHARLAGIDPATAARLAPNDSQRIQRALEVYLLTGQPMSALLAAPPRDDDAAAGLRFVPVALEPSERAVLHARIAARFDAMLEAGFIDEVERLRRRDDLHLGLPSMRCVGYRQAWEYLDGCTDYRTMRDKGIFATRQLCKRQLTWLRAMPERIVVDCCAPDATVRAVDALERVLDGRAPA.

17–24 (GPTASGKT) is an ATP binding site. 19 to 24 (TASGKT) is a binding site for substrate. 3 interaction with substrate tRNA regions span residues 42–45 (DSAL), 166–170 (QRIQR), and 251–256 (RCVGYR).

The protein belongs to the IPP transferase family. Monomer. Mg(2+) is required as a cofactor.

The catalysed reaction is adenosine(37) in tRNA + dimethylallyl diphosphate = N(6)-dimethylallyladenosine(37) in tRNA + diphosphate. In terms of biological role, catalyzes the transfer of a dimethylallyl group onto the adenine at position 37 in tRNAs that read codons beginning with uridine, leading to the formation of N6-(dimethylallyl)adenosine (i(6)A). In Burkholderia pseudomallei (strain 1106a), this protein is tRNA dimethylallyltransferase.